Reading from the N-terminus, the 330-residue chain is Putative pentatricopeptide repeat-containing protein At5g36300 (330 aa).

9 PPR repeats span residues 10–44 (SLSM…GSRP), 45–75 (DPLS…VVRF), 83–113 (VRLY…KFRL), 114–148 (NSFV…GLPM), 149–179 (DVEI…LQRS), 185–215 (NIRT…IFED), 231–265 (SANL…GIEP), 266–296 (NLIM…IKET), and 302–330 (DVVT…LVTL).

Belongs to the PPR family. P subfamily.

This chain is Putative pentatricopeptide repeat-containing protein At5g36300, found in Arabidopsis thaliana (Mouse-ear cress).